The chain runs to 457 residues: Phosphomethylpyrimidine synthase (457 aa).

Residues asparagine 80, methionine 109, tyrosine 139, histidine 175, 195–197, 236–239, and glutamate 275 each bind substrate; these read SRG and DSLR. Zn(2+) is bound at residue histidine 279. Tyrosine 302 contacts substrate. Zn(2+) is bound at residue histidine 343. [4Fe-4S] cluster-binding residues include cysteine 423, cysteine 426, and cysteine 431.

It belongs to the ThiC family. It depends on [4Fe-4S] cluster as a cofactor.

The catalysed reaction is 5-amino-1-(5-phospho-beta-D-ribosyl)imidazole + S-adenosyl-L-methionine = 4-amino-2-methyl-5-(phosphooxymethyl)pyrimidine + CO + 5'-deoxyadenosine + formate + L-methionine + 3 H(+). It participates in cofactor biosynthesis; thiamine diphosphate biosynthesis. Its function is as follows. Catalyzes the synthesis of the hydroxymethylpyrimidine phosphate (HMP-P) moiety of thiamine from aminoimidazole ribotide (AIR) in a radical S-adenosyl-L-methionine (SAM)-dependent reaction. The polypeptide is Phosphomethylpyrimidine synthase (Nostoc sp. (strain PCC 7120 / SAG 25.82 / UTEX 2576)).